We begin with the raw amino-acid sequence, 191 residues long: Dephospho-CoA kinase (191 aa).

A DPCK domain is found at 3 to 191; it reads AIGITGSYAS…KLIKDLECRV (189 aa). 11–16 lines the ATP pocket; the sequence is ASGKTF.

Belongs to the CoaE family.

It localises to the cytoplasm. It catalyses the reaction 3'-dephospho-CoA + ATP = ADP + CoA + H(+). It functions in the pathway cofactor biosynthesis; coenzyme A biosynthesis; CoA from (R)-pantothenate: step 5/5. Functionally, catalyzes the phosphorylation of the 3'-hydroxyl group of dephosphocoenzyme A to form coenzyme A. The polypeptide is Dephospho-CoA kinase (Rickettsia prowazekii (strain Madrid E)).